A 921-amino-acid chain; its full sequence is Leucine--tRNA ligase (921 aa).

The short motif at 41–52 (PYPSGSGLHVGH) is the 'HIGH' region element. The 'KMSKS' region signature appears at 695 to 699 (KMSKS). Lysine 698 contributes to the ATP binding site.

This sequence belongs to the class-I aminoacyl-tRNA synthetase family.

It localises to the cytoplasm. The catalysed reaction is tRNA(Leu) + L-leucine + ATP = L-leucyl-tRNA(Leu) + AMP + diphosphate. The protein is Leucine--tRNA ligase of Cytophaga hutchinsonii (strain ATCC 33406 / DSM 1761 / CIP 103989 / NBRC 15051 / NCIMB 9469 / D465).